A 112-amino-acid chain; its full sequence is Ferredoxin, plant-type (112 aa).

One can recognise a 2Fe-2S ferredoxin-type domain in the interval Tyr-6–Val-97. [2Fe-2S] cluster-binding residues include Cys-41, Cys-46, Cys-49, and Cys-81.

This sequence belongs to the 2Fe2S plant-type ferredoxin family.

The protein operates within aromatic compound metabolism; catechol degradation. Ferredoxins are iron-sulfur proteins that transfer electrons in a wide variety of metabolic reactions. This Pseudomonas putida (Arthrobacter siderocapsulatus) protein is Ferredoxin, plant-type (xylT).